We begin with the raw amino-acid sequence, 128 residues long: Small ribosomal subunit protein bS6 (128 aa).

Belongs to the bacterial ribosomal protein bS6 family.

In terms of biological role, binds together with bS18 to 16S ribosomal RNA. The sequence is that of Small ribosomal subunit protein bS6 from Thermotoga sp. (strain RQ2).